We begin with the raw amino-acid sequence, 316 residues long: Protoheme IX farnesyltransferase (316 aa).

9 helical membrane passes run 28-48, 50-70, 99-119, 122-142, 150-170, 178-198, 223-243, 244-264, and 293-313; these read IIPLLLITTAAAMEIASKGQV, PLLLFLTLLGGTLAAAAAQTL, HALIFALVLASLSLALFVFFV, LSGFLAMTGIAFYMLIYTHLL, IVIGGAAGSIPPLVGWAAVTG, ILFAIIFLWTPPHFWALALMI, IWLYTLIVVPFTFLLIYPLAA, CGVVYGVAALVLGFVFLKKAW, and AMVIDSLPMTSHLIATIASLF.

It belongs to the UbiA prenyltransferase family. Protoheme IX farnesyltransferase subfamily.

It is found in the cell inner membrane. It catalyses the reaction heme b + (2E,6E)-farnesyl diphosphate + H2O = Fe(II)-heme o + diphosphate. The protein operates within porphyrin-containing compound metabolism; heme O biosynthesis; heme O from protoheme: step 1/1. Functionally, converts heme B (protoheme IX) to heme O by substitution of the vinyl group on carbon 2 of heme B porphyrin ring with a hydroxyethyl farnesyl side group. This is Protoheme IX farnesyltransferase from Microcystis aeruginosa (strain NIES-843 / IAM M-2473).